We begin with the raw amino-acid sequence, 354 residues long: Glutamine synthetase cytosolic isozyme 1-3 (354 aa).

Ser-2 bears the N-acetylserine mark. Phosphoserine is present on residues Ser-2 and Ser-48. The GS beta-grasp domain occupies 19-99 (IIAEYIWIGG…VMCDAYTPAG (81 aa)). The GS catalytic domain occupies 106–354 (KRHNAAKIFS…SMIAETTILG (249 aa)).

The protein belongs to the glutamine synthetase family. In terms of assembly, homooctamer. In terms of tissue distribution, expressed in the pericycle in the region of mature root.

Its subcellular location is the cytoplasm. It catalyses the reaction L-glutamate + NH4(+) + ATP = L-glutamine + ADP + phosphate + H(+). Functionally, low-affinity glutamine synthetase. May contribute to the homeostatic control of glutamine synthesis in roots. This chain is Glutamine synthetase cytosolic isozyme 1-3 (GLN1-3), found in Arabidopsis thaliana (Mouse-ear cress).